The following is a 121-amino-acid chain: Large ribosomal subunit protein uL14 (121 aa).

Belongs to the universal ribosomal protein uL14 family. Part of the 50S ribosomal subunit. Forms a cluster with proteins L3 and L19. In the 70S ribosome, L14 and L19 interact and together make contacts with the 16S rRNA in bridges B5 and B8.

Binds to 23S rRNA. Forms part of two intersubunit bridges in the 70S ribosome. This is Large ribosomal subunit protein uL14 from Synechococcus sp. (strain CC9605).